An 811-amino-acid chain; its full sequence is Glycerol-3-phosphate acyltransferase (811 aa).

The HXXXXD motif motif lies at 303–308 (CHRSHM).

The protein belongs to the GPAT/DAPAT family.

The protein localises to the cell inner membrane. The catalysed reaction is sn-glycerol 3-phosphate + an acyl-CoA = a 1-acyl-sn-glycero-3-phosphate + CoA. Its pathway is phospholipid metabolism; CDP-diacylglycerol biosynthesis; CDP-diacylglycerol from sn-glycerol 3-phosphate: step 1/3. The protein is Glycerol-3-phosphate acyltransferase of Glaesserella parasuis serovar 5 (strain SH0165) (Haemophilus parasuis).